A 454-amino-acid polypeptide reads, in one-letter code: MDPYMIQMSSKGNLPSILDVHVNVGGRSSVPGKMKGRKARWSVRPSDMAKKTFNPIRAIVDNMKVKPNPNKTMISLSIGDPTVFGNLPTDPEVTQAMKDALDSGKYNGYAPSIGFLSSREEIASYYHCPEAPLEAKDVILTSGCSQAIDLCLAVLANPGQNILVPRPGFSLYKTLAESMGIEVKLYNLLPEKSWEIDLKQLEYLIDEKTACLIVNNPSNPCGSVFSKRHLQKILAVAARQCVPILADEIYGDMVFSDCKYEPLATLSTDVPILSCGGLAKRWLVPGWRLGWILIHDRRDIFGNEIRDGLVKLSQRILGPCTIVQGALKSILCRTPGEFYHNTLSFLKSNADLCYGALAAIPGLRPVRPSGAMYLMVGIEMEHFPEFENDVEFTERLVAEQSVHCLPATCFEYPNFIRVVITVPEVMMLEACSRIQEFCEQHYHCAEGSQEECDK.

N-acetylmethionine is present on M1. K280 carries the post-translational modification N6-(pyridoxal phosphate)lysine. Residue S448 is modified to Phosphoserine.

This sequence belongs to the class-I pyridoxal-phosphate-dependent aminotransferase family. As to quaternary structure, homodimer. The cofactor is pyridoxal 5'-phosphate.

The catalysed reaction is L-tyrosine + 2-oxoglutarate = 3-(4-hydroxyphenyl)pyruvate + L-glutamate. Its pathway is amino-acid degradation; L-phenylalanine degradation; acetoacetate and fumarate from L-phenylalanine: step 2/6. In terms of biological role, transaminase involved in tyrosine breakdown. Converts tyrosine to p-hydroxyphenylpyruvate. Can catalyze the reverse reaction, using glutamic acid, with 2-oxoglutarate as cosubstrate (in vitro). Has much lower affinity and transaminase activity towards phenylalanine. The polypeptide is Tyrosine aminotransferase (TAT) (Homo sapiens (Human)).